The sequence spans 309 residues: Methyltransferase AacuQ (309 aa).

The segment at 57 to 149 is methyltransferase domain; that stretch reads DVGAGNGPYA…QLRPGGTFAC (93 aa).

The protein belongs to the methyltransferase superfamily.

It functions in the pathway secondary metabolite biosynthesis. Functionally, methyltransferase; part of the gene cluster that mediates the biosynthesis of the tetrahydroxanthone dimer secalonic acid D. The pathway begins with the synthesis of atrochrysone thioester by the polyketide synthase AacuL. The atrochrysone carboxyl ACP thioesterase AacuM then breaks the thioester bond and releases the atrochrysone carboxylic acid from AacuL. Atrochrysone carboxylic acid is decarboxylated by the decarboxylase AacuI, and oxidized by the anthrone oxygenase AacuG to yield emodin. Emodin is then reduced to emodin hydroquinone by a yet unidentified oxidoreductase. A-ring reduction by the short chain dehydrogenase AacuN, dehydration by the scytalone dehydratase-like protein AacuK and probable spontaneous re-oxidation, results in overall deoxygenation to chrysophanol. Baeyer-Villiger oxidation by the Baeyer-Villiger monooxygenase (BVMO) AacuH then yields monodictyphenone. Monodictyphenone is transformed into compounds with the tetrahydroxanthone skeleton via methylesterification by the methyltransferase AacuQ, followed by the action of the flavin-dependent monooxygenase AacuC, the isomerase AacuP, and the short chain dehydrogenase/reductase AacuF or AacuD. AacuF and AacuD should accept the same compound as a substrate but perform the ketoreduction with a different stereoselectivity, thus yielding blennolides B and A, respectively. In the final step of the biosynthesis, the cytochrome P450 monooxygenase AacuE accepts blennolide B and/or blennolide A to conduct the dimerization reaction to furnish the tetrahydroxanthone dimers, secalonic acids D, B, and F. The protein is Methyltransferase AacuQ of Aspergillus aculeatus (strain ATCC 16872 / CBS 172.66 / WB 5094).